We begin with the raw amino-acid sequence, 335 residues long: Nucleotide-binding protein CYA_0911 (335 aa).

20–27 (GLTGSGKT) is an ATP binding site. The segment at 306-335 (ARFGPPPPAAGVEQQQVRIPLAGVPAPPHD) is disordered.

The protein belongs to the RapZ-like family.

Functionally, displays ATPase and GTPase activities. The polypeptide is Nucleotide-binding protein CYA_0911 (Synechococcus sp. (strain JA-3-3Ab) (Cyanobacteria bacterium Yellowstone A-Prime)).